Here is a 354-residue protein sequence, read N- to C-terminus: Threonine synthase (354 aa).

K61 carries the post-translational modification N6-(pyridoxal phosphate)lysine. Pyridoxal 5'-phosphate is bound by residues N87, 187–191 (GNAGN), and T316.

This sequence belongs to the threonine synthase family. Pyridoxal 5'-phosphate is required as a cofactor.

The catalysed reaction is O-phospho-L-homoserine + H2O = L-threonine + phosphate. Its pathway is amino-acid biosynthesis; L-threonine biosynthesis; L-threonine from L-aspartate: step 5/5. Functionally, catalyzes the gamma-elimination of phosphate from L-phosphohomoserine and the beta-addition of water to produce L-threonine. The chain is Threonine synthase (thrC) from Halalkalibacterium halodurans (strain ATCC BAA-125 / DSM 18197 / FERM 7344 / JCM 9153 / C-125) (Bacillus halodurans).